An 827-amino-acid chain; its full sequence is Periplasmic nitrate reductase (827 aa).

The segment at residues 1 to 32 (MNLSRRDFMKANAALAAASVAGLIIPVKNVNA) is a signal peptide (tat-type signal). The 4Fe-4S Mo/W bis-MGD-type domain maps to 37-93 (ITWDKAVCRFCGTGCAVLVGTKDGRVVASQGDPDAEVNRGLNCIKGYFLPKIMYGKD). The [4Fe-4S] cluster site is built by cysteine 44, cysteine 47, cysteine 51, and cysteine 79. Mo-bis(molybdopterin guanine dinucleotide) contacts are provided by residues lysine 81, glutamine 148, asparagine 173, cysteine 177, 210-217 (WGSNMAEM), 242-246 (STFEH), 261-263 (QSD), methionine 372, glutamine 376, asparagine 482, 508-509 (SD), lysine 531, aspartate 558, and 717-726 (TGRILEHWHT). Phenylalanine 793 is a binding site for substrate. Positions 801 and 818 each coordinate Mo-bis(molybdopterin guanine dinucleotide).

It belongs to the prokaryotic molybdopterin-containing oxidoreductase family. NasA/NapA/NarB subfamily. In terms of assembly, component of the periplasmic nitrate reductase NapAB complex composed of NapA and NapB. [4Fe-4S] cluster serves as cofactor. Requires Mo-bis(molybdopterin guanine dinucleotide) as cofactor. Post-translationally, predicted to be exported by the Tat system. The position of the signal peptide cleavage has not been experimentally proven.

The protein resides in the periplasm. It carries out the reaction 2 Fe(II)-[cytochrome] + nitrate + 2 H(+) = 2 Fe(III)-[cytochrome] + nitrite + H2O. Catalytic subunit of the periplasmic nitrate reductase complex NapAB. Receives electrons from NapB and catalyzes the reduction of nitrate to nitrite. The protein is Periplasmic nitrate reductase of Histophilus somni (strain 129Pt) (Haemophilus somnus).